A 145-amino-acid chain; its full sequence is CBS domain-containing protein DDB_G0289609 (145 aa).

2 CBS domains span residues 9-66 and 84-141; these read MSKS…FLPE and MKQN…LEPV.

The protein is CBS domain-containing protein DDB_G0289609 of Dictyostelium discoideum (Social amoeba).